The following is a 238-amino-acid chain: Ribosomal RNA small subunit methyltransferase G (238 aa).

Residues Gly-78, 129–130, and Arg-148 contribute to the S-adenosyl-L-methionine site; that span reads AE.

It belongs to the methyltransferase superfamily. RNA methyltransferase RsmG family.

The protein resides in the cytoplasm. Functionally, specifically methylates the N7 position of a guanine in 16S rRNA. The protein is Ribosomal RNA small subunit methyltransferase G of Caldicellulosiruptor bescii (strain ATCC BAA-1888 / DSM 6725 / KCTC 15123 / Z-1320) (Anaerocellum thermophilum).